The chain runs to 335 residues: Erlin-2 (335 aa).

Residues 1–2 (MS) are Cytoplasmic-facing. The chain crosses the membrane as a helical span at residues 3 to 23 (HAGAIAAIGVALIAAALFSAI). The Lumenal portion of the chain corresponds to 24–335 (HKIEEGHVGV…ALNEPAVGDE (312 aa)). N106 carries an N-linked (GlcNAc...) asparagine glycan. The segment covering 310 to 321 (AGPSVQSATLLQ) has biased composition (polar residues). The disordered stretch occupies residues 310–335 (AGPSVQSATLLQDDSPALNEPAVGDE).

Belongs to the band 7/mec-2 family.

It localises to the endoplasmic reticulum membrane. In terms of biological role, mediates the endoplasmic reticulum-associated degradation (ERAD) of inositol 1,4,5-trisphosphate receptors (IP3Rs). Promotes sterol-accelerated ERAD of HMGCR. Involved in regulation of cellular cholesterol homeostasis by regulation the SREBP signaling pathway. The protein is Erlin-2 (erlin2) of Xenopus tropicalis (Western clawed frog).